The primary structure comprises 175 residues: Inorganic pyrophosphatase (175 aa).

Residues K30, R44, and Y56 each contribute to the substrate site. Mg(2+)-binding residues include D66, D71, and D103. Y142 lines the substrate pocket.

Belongs to the PPase family. As to quaternary structure, homohexamer. Mg(2+) serves as cofactor.

The protein localises to the cytoplasm. It catalyses the reaction diphosphate + H2O = 2 phosphate + H(+). Its function is as follows. Catalyzes the hydrolysis of inorganic pyrophosphate (PPi) forming two phosphate ions. This is Inorganic pyrophosphatase from Haemophilus ducreyi (strain 35000HP / ATCC 700724).